A 98-amino-acid polypeptide reads, in one-letter code: Putative septation protein SpoVG (98 aa).

This sequence belongs to the SpoVG family.

Functionally, essential for sporulation. Interferes with or is a negative regulator of the pathway leading to asymmetric septation. This chain is Putative septation protein SpoVG, found in Bacillus pumilus (strain SAFR-032).